We begin with the raw amino-acid sequence, 3470 residues long: Dynein axonemal heavy chain 5 (3470 aa).

The segment at methionine 1 to threonine 1938 is stem. The segment at glutamate 899 to glycine 918 is disordered. 4 AAA regions span residues tyrosine 1939–threonine 2161, threonine 2221–leucine 2440, valine 2547–glycine 2800, and leucine 2913–serine 3167. ATP is bound by residues glycine 1977–threonine 1984 and glycine 2259–threonine 2266. Coiled coils occupy residues leucine 3207–glutamate 3241 and histidine 3434–glutamate 3468.

Belongs to the dynein heavy chain family. Interacts with DNAL1. Consists of at least two heavy chains and a number of intermediate and light chains.

The protein localises to the cytoplasm. Its subcellular location is the cytoskeleton. It localises to the cilium axoneme. In terms of biological role, force generating protein of respiratory cilia. Produces force towards the minus ends of microtubules. Dynein has ATPase activity; the force-producing power stroke is thought to occur on release of ADP. Required for structural and functional integrity of the cilia of ependymal cells lining the brain ventricles. The sequence is that of Dynein axonemal heavy chain 5 from Rattus norvegicus (Rat).